We begin with the raw amino-acid sequence, 226 residues long: MIDKSSADILEISAKCGYLTGLLKNVYRSANIIVTDMSPLLLDSFDHNHKLLIDDENLEFQKDSFDLIIYSLGLHWINDVQRFLYNIRTFLKSDGIFIGNFVGGDSLKNLRKSLIDNEIASGFKHSPHISPFIHFDHVPMLLLHAGFSEVIVDYENIALKFENPIVLMKEIKNIGESNALNSQHNYAISKKMFSLLKNYINVFEDNITLISFIAAPNKNSLRLKLL.

The protein belongs to the methyltransferase superfamily.

This Rickettsia prowazekii (strain Madrid E) protein is Putative methyltransferase RP459.